A 542-amino-acid chain; its full sequence is Cytochrome P450 monooxygenase 91 (542 aa).

An N-terminal signal peptide occupies residues 1-22 (MLDILRFVLICGILWILRRVLL). N-linked (GlcNAc...) asparagine glycans are attached at residues asparagine 299 and asparagine 392. A heme-binding site is contributed by cysteine 482.

It belongs to the cytochrome P450 family. Requires heme as cofactor.

It functions in the pathway secondary metabolite biosynthesis. Its function is as follows. Cytochrome P450 monooxygenase that is able to use dehydroabietic acid as a substrate for oxidation. The protein is Cytochrome P450 monooxygenase 91 of Postia placenta (strain ATCC 44394 / Madison 698-R) (Brown rot fungus).